Reading from the N-terminus, the 286-residue chain is Sulfate transport system permease protein CysT (286 aa).

Transmembrane regions (helical) follow at residues 27-47 (WVVT…ALLV), 74-94 (FITA…VAWV), 108-128 (AMVD…LATL), 146-166 (IAFS…PFIV), 195-215 (FWRV…ALGF), 224-244 (SVVL…VLVF), and 257-276 (VIGA…INLL). The ABC transmembrane type-1 domain occupies 70-273 (YNVTFITALA…SVSLILLLII (204 aa)).

It belongs to the binding-protein-dependent transport system permease family. CysTW subfamily. In terms of assembly, the complex is composed of two ATP-binding proteins (CysA), two transmembrane proteins (CysT and CysW) and a solute-binding protein (CysP).

The protein resides in the cell inner membrane. In terms of biological role, part of the ABC transporter complex CysAWTP (TC 3.A.1.6.1) involved in sulfate/thiosulfate import. Probably responsible for the translocation of the substrate across the membrane. This Synechocystis sp. (strain ATCC 27184 / PCC 6803 / Kazusa) protein is Sulfate transport system permease protein CysT (cysT).